A 195-amino-acid polypeptide reads, in one-letter code: dCTP deaminase (195 aa).

Residues 110–115 (RSSLAR), aspartate 128, 136–138 (VLE), tyrosine 171, lysine 178, and glutamine 182 contribute to the dCTP site. Glutamate 138 serves as the catalytic Proton donor/acceptor. Positions 169-179 (RPYSSRKDAKY) are enriched in basic and acidic residues. The interval 169-195 (RPYSSRKDAKYKNQQSAVASRIDEDKE) is disordered.

Belongs to the dCTP deaminase family. Homotrimer.

It carries out the reaction dCTP + H2O + H(+) = dUTP + NH4(+). It functions in the pathway pyrimidine metabolism; dUMP biosynthesis; dUMP from dCTP (dUTP route): step 1/2. Functionally, catalyzes the deamination of dCTP to dUTP. The sequence is that of dCTP deaminase from Haemophilus influenzae (strain 86-028NP).